The sequence spans 393 residues: UDP-glucose 6-dehydrogenase (393 aa).

NAD(+)-binding residues include Val-11, Asp-31, Lys-36, Thr-85, Thr-120, and Glu-147. Substrate contacts are provided by residues Glu-143–Glu-147, Lys-199, Asn-203, Tyr-244–Ser-248, and Gly-252. Residue Tyr-254 participates in NAD(+) binding. Catalysis depends on Cys-255, which acts as the Nucleophile. NAD(+) is bound at residue Lys-258. Lys-309 serves as a coordination point for substrate. Arg-316 provides a ligand contact to NAD(+).

It belongs to the UDP-glucose/GDP-mannose dehydrogenase family. As to quaternary structure, homodimer.

It carries out the reaction UDP-alpha-D-glucose + 2 NAD(+) + H2O = UDP-alpha-D-glucuronate + 2 NADH + 3 H(+). Its pathway is nucleotide-sugar biosynthesis; UDP-alpha-D-glucuronate biosynthesis; UDP-alpha-D-glucuronate from UDP-alpha-D-glucose: step 1/1. It functions in the pathway capsule biogenesis; capsule polysaccharide biosynthesis. Its function is as follows. Catalyzes the formation of UDP-glucuronic acid which is required for capsular polysaccharide synthesis. Does not catalyze the formation of glucuronamide moiety of the capsular polysaccharide. The polypeptide is UDP-glucose 6-dehydrogenase (Campylobacter jejuni subsp. jejuni serotype O:2 (strain ATCC 700819 / NCTC 11168)).